An 84-amino-acid polypeptide reads, in one-letter code: Large ribosomal subunit protein bL27 (84 aa).

Residues 1-21 (MAHKKGGGSTKNGRDSNPKYL) form a disordered region.

The protein belongs to the bacterial ribosomal protein bL27 family.

This chain is Large ribosomal subunit protein bL27, found in Chlorobaculum parvum (strain DSM 263 / NCIMB 8327) (Chlorobium vibrioforme subsp. thiosulfatophilum).